The following is a 53-amino-acid chain: UPF0391 membrane protein ETA_06630 (53 aa).

2 helical membrane-spanning segments follow: residues 4 to 24 (WGII…GGLA) and 27 to 47 (AAWA…ISLF).

Belongs to the UPF0391 family.

It is found in the cell membrane. The chain is UPF0391 membrane protein ETA_06630 from Erwinia tasmaniensis (strain DSM 17950 / CFBP 7177 / CIP 109463 / NCPPB 4357 / Et1/99).